The following is a 270-amino-acid chain: Endochitinase PR4 (270 aa).

Residues 1-23 (MGNKLVLVLVAVALVMGPKNVSA) form the signal peptide. In terms of domain architecture, Chitin-binding type-1 spans 24–58 (QNCGCAEGLCCSQYGYCGTGEDYCGTGCQQGPCTT). 7 cysteine pairs are disulfide-bonded: cysteine 26–cysteine 34, cysteine 28–cysteine 40, cysteine 33–cysteine 47, cysteine 51–cysteine 56, cysteine 88–cysteine 137, cysteine 150–cysteine 160, and cysteine 238–cysteine 270. The active-site Proton donor is glutamate 132.

Belongs to the glycosyl hydrolase 19 family. Chitinase class I subfamily.

The catalysed reaction is Random endo-hydrolysis of N-acetyl-beta-D-glucosaminide (1-&gt;4)-beta-linkages in chitin and chitodextrins.. Its function is as follows. Defense against chitin-containing fungal pathogens. This chain is Endochitinase PR4 (CHI4), found in Phaseolus vulgaris (Kidney bean).